The primary structure comprises 603 residues: Cholinesterase (603 aa).

An N-terminal signal peptide occupies residues 1–29; that stretch reads MQTQHTKVTQTHFLLWILLLCMPFGKSHT. Asn86 is a glycosylation site (N-linked (GlcNAc...) asparagine). The cysteines at positions 94 and 121 are disulfide-linked. Asn135 carries N-linked (GlcNAc...) asparagine glycosylation. 145-146 contributes to the substrate binding site; sequence GG. Ser227 serves as the catalytic Acyl-ester intermediate. Ser227 is modified (phosphoserine). N-linked (GlcNAc...) asparagine glycosylation is present at Asn270. Cys281 and Cys292 are joined by a disulfide. The Charge relay system role is filled by Glu354. N-linked (GlcNAc...) asparagine glycosylation is present at Asn370. Residues Cys429 and Cys548 are joined by a disulfide bond. Catalysis depends on His467, which acts as the Charge relay system. N-linked (GlcNAc...) asparagine glycans are attached at residues Asn484, Asn510, and Asn515.

This sequence belongs to the type-B carboxylesterase/lipase family. As to quaternary structure, homotetramer; disulfide-linked. Dimer of dimers. As to expression, present in most cells except erythrocytes.

It localises to the secreted. It carries out the reaction an acylcholine + H2O = a carboxylate + choline + H(+). Esterase with broad substrate specificity. Contributes to the inactivation of the neurotransmitter acetylcholine. Can degrade neurotoxic organophosphate esters. In Mus musculus (Mouse), this protein is Cholinesterase (Bche).